The primary structure comprises 223 residues: Holliday junction branch migration complex subunit RuvA (223 aa).

The tract at residues 1–64 (MIGRIAGVIL…EDLLQLFGFP (64 aa)) is domain I. A domain II region spans residues 65–143 (TLLEKEWHRL…AVMALGGALT (79 aa)). Residues 144 to 169 (VDPGPLPEVELVEAAVPAPVPAKAAP) form a flexible linker region. A domain III region spans residues 170–223 (SSAQATADALSALGNLGYAPSEAASAVAEAAAREPAAPTAALIRAALRLLAPKE).

This sequence belongs to the RuvA family. In terms of assembly, homotetramer. Forms an RuvA(8)-RuvB(12)-Holliday junction (HJ) complex. HJ DNA is sandwiched between 2 RuvA tetramers; dsDNA enters through RuvA and exits via RuvB. An RuvB hexamer assembles on each DNA strand where it exits the tetramer. Each RuvB hexamer is contacted by two RuvA subunits (via domain III) on 2 adjacent RuvB subunits; this complex drives branch migration. In the full resolvosome a probable DNA-RuvA(4)-RuvB(12)-RuvC(2) complex forms which resolves the HJ.

It localises to the cytoplasm. In terms of biological role, the RuvA-RuvB-RuvC complex processes Holliday junction (HJ) DNA during genetic recombination and DNA repair, while the RuvA-RuvB complex plays an important role in the rescue of blocked DNA replication forks via replication fork reversal (RFR). RuvA specifically binds to HJ cruciform DNA, conferring on it an open structure. The RuvB hexamer acts as an ATP-dependent pump, pulling dsDNA into and through the RuvAB complex. HJ branch migration allows RuvC to scan DNA until it finds its consensus sequence, where it cleaves and resolves the cruciform DNA. The sequence is that of Holliday junction branch migration complex subunit RuvA from Paracoccus denitrificans (strain Pd 1222).